The following is a 157-amino-acid chain: Protein Smg homolog (157 aa).

It belongs to the Smg family.

The sequence is that of Protein Smg homolog from Colwellia psychrerythraea (strain 34H / ATCC BAA-681) (Vibrio psychroerythus).